Here is a 176-residue protein sequence, read N- to C-terminus: uncharacterized protein (176 aa).

This is an uncharacterized protein from Dictyostelium discoideum (Social amoeba).